Consider the following 475-residue polypeptide: uncharacterized protein (475 aa).

The disordered stretch occupies residues 42–292; it reads NLQNSLTGKT…NTRKGQRHNN (251 aa). 2 stretches are compositionally biased toward basic and acidic residues: residues 59–72 and 119–134; these read EANHTSSDKSKSED and IAEKQVEDRKLSDDSQ. 2 stretches are compositionally biased toward polar residues: residues 150-159 and 220-242; these read ITPNFTHTPI and NNTFGSQTVSSANGKEVPQTSED. Residues 243-263 are compositionally biased toward low complexity; sequence SSSQAPHHSSSSGHAPSQQGG. A compositionally biased stretch (basic residues) spans 277–289; sequence FHHKGRNTRKGQR. The region spanning 319-408 is the HTH La-type RNA-binding domain; the sequence is NPYLCDVQAF…MSIKVRRKET (90 aa). Threonine 408 carries the phosphothreonine modification. Serine 410 is modified (phosphoserine).

Its subcellular location is the cytoplasm. This is an uncharacterized protein from Schizosaccharomyces pombe (strain 972 / ATCC 24843) (Fission yeast).